The sequence spans 83 residues: Holin-like protein 24.1 (83 aa).

Positions 1 to 45 (MEQMRQDIIELKQNDKSQEQRISLLERTSDRHDQQIQAVTESLSK) form a coiled coil. The helical transmembrane segment at 57–77 (ITGAIISTLSTVVVGGILTIV) threads the bilayer.

It localises to the host cell inner membrane. Its function is as follows. Probably functions as a holin together with holin-like protein 26. Accumulates harmlessly in the cytoplasmic membrane until it reaches a critical concentration that triggers the formation of micron-scale pores (holes) causing host cell membrane disruption and endolysin escape into the periplasmic space. Determines the precise timing of host cell lysis. This is Holin-like protein 24.1 (24.1) from Bacillus subtilis (Bacteriophage SPP1).